Here is a 315-residue protein sequence, read N- to C-terminus: Cysteine synthase (315 aa).

2 residues coordinate hydrogen sulfide: asparagine 8 and arginine 35. Lysine 42 bears the N6-(pyridoxal phosphate)lysine mark. Pyridoxal 5'-phosphate-binding positions include asparagine 72 and 177 to 181; that span reads GTGGT. Leucine 269 provides a ligand contact to hydrogen sulfide. A pyridoxal 5'-phosphate-binding site is contributed by serine 273.

The protein belongs to the cysteine synthase/cystathionine beta-synthase family. As to quaternary structure, homodimer. Requires pyridoxal 5'-phosphate as cofactor.

The catalysed reaction is O-acetyl-L-serine + hydrogen sulfide = L-cysteine + acetate. Its pathway is amino-acid biosynthesis; L-cysteine biosynthesis; L-cysteine from L-serine: step 2/2. In Buchnera aphidicola subsp. Acyrthosiphon pisum (strain APS) (Acyrthosiphon pisum symbiotic bacterium), this protein is Cysteine synthase (cysK).